A 684-amino-acid chain; its full sequence is Homoaconitase, mitochondrial (684 aa).

The [4Fe-4S] cluster site is built by Cys337, Cys397, and Cys400.

The protein belongs to the aconitase/IPM isomerase family. Requires [4Fe-4S] cluster as cofactor.

Its subcellular location is the mitochondrion. It catalyses the reaction (2R,3S)-homoisocitrate = cis-homoaconitate + H2O. The protein operates within amino-acid biosynthesis; L-lysine biosynthesis via AAA pathway; L-alpha-aminoadipate from 2-oxoglutarate: step 3/5. In terms of biological role, catalyzes the reversible hydration of cis-homoaconitate to (2R,3S)-homoisocitrate, a step in the alpha-aminoadipate pathway for lysine biosynthesis. This is Homoaconitase, mitochondrial (LYS4) from Candida albicans (strain SC5314 / ATCC MYA-2876) (Yeast).